Consider the following 354-residue polypeptide: Probable tartrate dehydrogenase/decarboxylase (354 aa).

3 residues coordinate Mn(2+): Asp-221, Asp-245, and Asp-249.

Belongs to the isocitrate and isopropylmalate dehydrogenases family. It depends on Mg(2+) as a cofactor. Mn(2+) is required as a cofactor. K(+) serves as cofactor.

It catalyses the reaction tartrate + NAD(+) = 2-hydroxy-3-oxosuccinate + NADH + H(+). The enzyme catalyses (2R,3S)-tartrate + NAD(+) = 2-hydroxy-3-oxosuccinate + NADH + H(+). It carries out the reaction (2R,3R)-tartrate + NAD(+) = 2-hydroxy-3-oxosuccinate + NADH + H(+). The catalysed reaction is (2R,3R)-tartrate + H(+) = (R)-glycerate + CO2. It catalyses the reaction (R)-malate + NAD(+) = pyruvate + CO2 + NADH. Functionally, has multiple catalytic activities. Apart from catalyzing the oxidation of (+)-tartrate to oxaloglycolate, also converts meso-tartrate to D-glycerate and catalyzes the oxidative decarboxylation of D-malate to pyruvate. This is Probable tartrate dehydrogenase/decarboxylase (ycsA) from Bacillus subtilis (strain 168).